Reading from the N-terminus, the 147-residue chain is 3-dehydroquinate dehydratase (147 aa).

Tyr-24 acts as the Proton acceptor in catalysis. Substrate is bound by residues Asn-75, His-81, and Asp-88. His-101 acts as the Proton donor in catalysis. Residues 102–103 (IS) and Arg-112 each bind substrate.

It belongs to the type-II 3-dehydroquinase family. As to quaternary structure, homododecamer.

It catalyses the reaction 3-dehydroquinate = 3-dehydroshikimate + H2O. Its pathway is metabolic intermediate biosynthesis; chorismate biosynthesis; chorismate from D-erythrose 4-phosphate and phosphoenolpyruvate: step 3/7. Catalyzes a trans-dehydration via an enolate intermediate. The sequence is that of 3-dehydroquinate dehydratase from Cereibacter sphaeroides (strain ATCC 17023 / DSM 158 / JCM 6121 / CCUG 31486 / LMG 2827 / NBRC 12203 / NCIMB 8253 / ATH 2.4.1.) (Rhodobacter sphaeroides).